Consider the following 727-residue polypeptide: Phosphoribosylformylglycinamidine synthase subunit PurL (727 aa).

The active site involves histidine 47. The ATP site is built by tyrosine 50 and lysine 82. Residue glutamate 84 participates in Mg(2+) binding. Substrate-binding positions include 85–88 and arginine 107; that span reads SHNH. Histidine 86 (proton acceptor) is an active-site residue. Position 108 (aspartate 108) interacts with Mg(2+). Glutamine 229 contributes to the substrate binding site. Mg(2+) is bound at residue aspartate 257. Residue 301–303 participates in substrate binding; sequence ESQ. ATP is bound by residues aspartate 486 and glycine 523. Position 524 (asparagine 524) interacts with Mg(2+). Serine 526 is a binding site for substrate.

It belongs to the FGAMS family. Monomer. Part of the FGAM synthase complex composed of 1 PurL, 1 PurQ and 2 PurS subunits.

The protein resides in the cytoplasm. It catalyses the reaction N(2)-formyl-N(1)-(5-phospho-beta-D-ribosyl)glycinamide + L-glutamine + ATP + H2O = 2-formamido-N(1)-(5-O-phospho-beta-D-ribosyl)acetamidine + L-glutamate + ADP + phosphate + H(+). The protein operates within purine metabolism; IMP biosynthesis via de novo pathway; 5-amino-1-(5-phospho-D-ribosyl)imidazole from N(2)-formyl-N(1)-(5-phospho-D-ribosyl)glycinamide: step 1/2. Part of the phosphoribosylformylglycinamidine synthase complex involved in the purines biosynthetic pathway. Catalyzes the ATP-dependent conversion of formylglycinamide ribonucleotide (FGAR) and glutamine to yield formylglycinamidine ribonucleotide (FGAM) and glutamate. The FGAM synthase complex is composed of three subunits. PurQ produces an ammonia molecule by converting glutamine to glutamate. PurL transfers the ammonia molecule to FGAR to form FGAM in an ATP-dependent manner. PurS interacts with PurQ and PurL and is thought to assist in the transfer of the ammonia molecule from PurQ to PurL. The protein is Phosphoribosylformylglycinamidine synthase subunit PurL of Petrotoga mobilis (strain DSM 10674 / SJ95).